Reading from the N-terminus, the 333-residue chain is 4-hydroxyproline 2-epimerase (333 aa).

Residue Cys90 is the Proton acceptor of the active site. Residues 91–92 (GH), His223, and Asp249 each bind substrate. Residue Cys253 is the Proton donor of the active site. Position 254–255 (254–255 (GT)) interacts with substrate.

Belongs to the proline racemase family.

It carries out the reaction trans-4-hydroxy-L-proline = cis-4-hydroxy-D-proline. Catalyzes the epimerization of trans-4-hydroxy-L-proline (t4LHyp) to cis-4-hydroxy-D-proline (c4DHyp). May be involved in a degradation pathway of t4LHyp, which would allow S.novella to grow on t4LHyp as a sole carbon source. The chain is 4-hydroxyproline 2-epimerase from Ancylobacter novellus (strain ATCC 8093 / DSM 506 / JCM 20403 / CCM 1077 / IAM 12100 / NBRC 12443 / NCIMB 10456) (Starkeya novella).